The chain runs to 363 residues: Adenosine kinase (363 aa).

Alanine 185, isoleucine 188, and alanine 191 together coordinate Mg(2+). Residue aspartate 318 is part of the active site.

This sequence belongs to the carbohydrate kinase PfkB family. It depends on Mg(2+) as a cofactor.

The enzyme catalyses adenosine + ATP = AMP + ADP + H(+). It participates in purine metabolism; AMP biosynthesis via salvage pathway; AMP from adenosine: step 1/1. Its function is as follows. ATP-dependent phosphorylation of adenosine and other related nucleoside analogs to monophosphate derivatives. It is a key purine metabolic enzyme in the opportunistic parasitic protozoan toxoplasma gondii as it cannot synthesize purines de novo. The sequence is that of Adenosine kinase (AK) from Toxoplasma gondii.